The chain runs to 148 residues: Deoxyuridine 5'-triphosphate nucleotidohydrolase (148 aa).

Residues 68–70 (RSG), asparagine 81, 85–87 (TID), and lysine 95 contribute to the substrate site.

This sequence belongs to the dUTPase family. Mg(2+) serves as cofactor.

It carries out the reaction dUTP + H2O = dUMP + diphosphate + H(+). It participates in pyrimidine metabolism; dUMP biosynthesis; dUMP from dCTP (dUTP route): step 2/2. In terms of biological role, this enzyme is involved in nucleotide metabolism: it produces dUMP, the immediate precursor of thymidine nucleotides and it decreases the intracellular concentration of dUTP so that uracil cannot be incorporated into DNA. The polypeptide is Deoxyuridine 5'-triphosphate nucleotidohydrolase (Rickettsia rickettsii (strain Iowa)).